The following is a 303-amino-acid chain: WD repeat-containing protein 38 (303 aa).

7 WD repeats span residues Gln24–Arg63, Gly66–Val105, Gly108–Leu147, Gly150–Ser189, Gly195–Gln233, Gly236–Lys277, and Met279–Arg303.

This Mus musculus (Mouse) protein is WD repeat-containing protein 38 (Wdr38).